The sequence spans 556 residues: Putative solute carrier family 22 member 31 (556 aa).

Residues Met-1–Ser-23 are Cytoplasmic-facing. Residues Ala-24–Ala-44 traverse the membrane as a helical segment. Over Gln-45–Lys-128 the chain is Extracellular. Residues Val-129–Ala-149 traverse the membrane as a helical segment. The Cytoplasmic segment spans residues Gly-150 to Arg-157. Residues Ala-158–Ala-178 traverse the membrane as a helical segment. Residues Ser-179 to Thr-182 lie on the Extracellular side of the membrane. A helical transmembrane segment spans residues Leu-183–Leu-203. At Ala-204 to Ser-218 the chain is on the cytoplasmic side. The helical transmembrane segment at Met-219–Val-239 threads the bilayer. Topologically, residues Gln-240–Gln-246 are extracellular. A helical membrane pass occupies residues Gly-247–Pro-267. Residues Glu-268 to Gly-339 are Cytoplasmic-facing. Residues Leu-340–Arg-357 traverse the membrane as a helical segment. The Extracellular segment spans residues Arg-358–Thr-366. Residues Phe-367–Leu-387 form a helical membrane-spanning segment. The Cytoplasmic segment spans residues Thr-388–Arg-395. Residues Pro-396 to Ala-416 form a helical membrane-spanning segment. At Gln-417–Pro-420 the chain is on the extracellular side. The helical transmembrane segment at Gly-421–Leu-441 threads the bilayer. The Cytoplasmic segment spans residues Ser-442 to Glu-448. A helical membrane pass occupies residues Val-449 to Gly-469. The Extracellular segment spans residues Gln-470–Gly-483. A helical membrane pass occupies residues Phe-484–Leu-504. At Leu-505–His-556 the chain is on the cytoplasmic side. Residues Arg-524–His-556 form a disordered region.

The protein belongs to the major facilitator (TC 2.A.1) superfamily. Organic cation transporter (TC 2.A.1.19) family.

The protein resides in the membrane. Its function is as follows. Organic anion transporter that mediates the uptake of ions. This is Putative solute carrier family 22 member 31 from Homo sapiens (Human).